A 322-amino-acid polypeptide reads, in one-letter code: 4-hydroxy-3-methylbut-2-enyl diphosphate reductase (322 aa).

C15 lines the [4Fe-4S] cluster pocket. (2E)-4-hydroxy-3-methylbut-2-enyl diphosphate contacts are provided by H44 and H77. The dimethylallyl diphosphate site is built by H44 and H77. H44 and H77 together coordinate isopentenyl diphosphate. Residue C99 coordinates [4Fe-4S] cluster. Residue H127 coordinates (2E)-4-hydroxy-3-methylbut-2-enyl diphosphate. H127 contributes to the dimethylallyl diphosphate binding site. H127 lines the isopentenyl diphosphate pocket. The active-site Proton donor is the E129. T168 lines the (2E)-4-hydroxy-3-methylbut-2-enyl diphosphate pocket. Residue C198 participates in [4Fe-4S] cluster binding. (2E)-4-hydroxy-3-methylbut-2-enyl diphosphate-binding residues include S226, S227, N228, and S270. Residues S226, S227, N228, and S270 each contribute to the dimethylallyl diphosphate site. The isopentenyl diphosphate site is built by S226, S227, N228, and S270.

Belongs to the IspH family. [4Fe-4S] cluster serves as cofactor.

The catalysed reaction is isopentenyl diphosphate + 2 oxidized [2Fe-2S]-[ferredoxin] + H2O = (2E)-4-hydroxy-3-methylbut-2-enyl diphosphate + 2 reduced [2Fe-2S]-[ferredoxin] + 2 H(+). The enzyme catalyses dimethylallyl diphosphate + 2 oxidized [2Fe-2S]-[ferredoxin] + H2O = (2E)-4-hydroxy-3-methylbut-2-enyl diphosphate + 2 reduced [2Fe-2S]-[ferredoxin] + 2 H(+). The protein operates within isoprenoid biosynthesis; dimethylallyl diphosphate biosynthesis; dimethylallyl diphosphate from (2E)-4-hydroxy-3-methylbutenyl diphosphate: step 1/1. Its pathway is isoprenoid biosynthesis; isopentenyl diphosphate biosynthesis via DXP pathway; isopentenyl diphosphate from 1-deoxy-D-xylulose 5-phosphate: step 6/6. Catalyzes the conversion of 1-hydroxy-2-methyl-2-(E)-butenyl 4-diphosphate (HMBPP) into a mixture of isopentenyl diphosphate (IPP) and dimethylallyl diphosphate (DMAPP). Acts in the terminal step of the DOXP/MEP pathway for isoprenoid precursor biosynthesis. The protein is 4-hydroxy-3-methylbut-2-enyl diphosphate reductase of Neisseria meningitidis serogroup A / serotype 4A (strain DSM 15465 / Z2491).